The primary structure comprises 396 residues: E3 ubiquitin-protein ligase NHLRC1 (396 aa).

The segment at 23–69 (CKVCFERFGHRQQRRPRNLPCGHVVCLACVAALAHPRTLALECPFCR) adopts an RING-type zinc-finger fold. 6 NHL repeats span residues 110-154 (ALTC…FDSG), 158-201 (AHQF…FDFF), 202-242 (GQIK…LEAD), 245-298 (EGVL…FNSS), 299-347 (MQLI…LGKP), and 348-391 (EEFP…FKVM).

Interacts with AGL. Interacts (via the NHL repeats) with EPM2A/laforin. Forms a complex with EPM2A/laforin and HSP70.

The protein localises to the endoplasmic reticulum. It is found in the nucleus. It catalyses the reaction S-ubiquitinyl-[E2 ubiquitin-conjugating enzyme]-L-cysteine + [acceptor protein]-L-lysine = [E2 ubiquitin-conjugating enzyme]-L-cysteine + N(6)-ubiquitinyl-[acceptor protein]-L-lysine.. Its pathway is protein modification; protein ubiquitination. Functionally, E3 ubiquitin-protein ligase. Together with the phosphatase EPM2A/laforin, appears to be involved in the clearance of toxic polyglucosan and protein aggregates via multiple pathways. In complex with EPM2A/laforin and HSP70, suppresses the cellular toxicity of misfolded proteins by promoting their degradation through the ubiquitin-proteasome system (UPS). Ubiquitinates the glycogen-targeting protein phosphatase subunits PPP1R3C/PTG and PPP1R3D in a laforin-dependent manner and targets them for proteasome-dependent degradation, thus decreasing glycogen accumulation. Polyubiquitinates EPM2A/laforin and ubiquitinates AGL and targets them for proteasome-dependent degradation. Also promotes proteasome-independent protein degradation through the macroautophagy pathway. This Rattus norvegicus (Rat) protein is E3 ubiquitin-protein ligase NHLRC1 (Nhlrc1).